The primary structure comprises 586 residues: Asparagine synthetase [glutamine-hydrolyzing] (586 aa).

The active-site For GATase activity is Cys-2. Residues 2–185 form the Glutamine amidotransferase type-2 domain; that stretch reads CGILAVLGCS…PGHLYSSKSG (184 aa). L-glutamine is bound by residues 50–54, 75–77, and Asp-98; these read RLAII and NGE. The region spanning 194–517 is the Asparagine synthetase domain; sequence PPWFNESVPS…PQNSARLTVP (324 aa). ATP contacts are provided by residues Leu-232, Val-268, and 342–343; that span reads SG.

Belongs to the asparagine synthetase family.

The catalysed reaction is L-aspartate + L-glutamine + ATP + H2O = L-asparagine + L-glutamate + AMP + diphosphate + H(+). It functions in the pathway amino-acid biosynthesis; L-asparagine biosynthesis; L-asparagine from L-aspartate (L-Gln route): step 1/1. This is Asparagine synthetase [glutamine-hydrolyzing] from Brassica oleracea (Wild cabbage).